A 187-amino-acid polypeptide reads, in one-letter code: UPF0301 protein LPC_2717 (187 aa).

The protein belongs to the UPF0301 (AlgH) family.

The polypeptide is UPF0301 protein LPC_2717 (Legionella pneumophila (strain Corby)).